Here is a 428-residue protein sequence, read N- to C-terminus: MSYLFTSESVSEGHPDKVADQISDALLDEFLAYDKNSKVACETLVTTGQVVLAGEVKSSAYVDVQEVARGVIEKIGYTKSEYQFEAKSCGVFSSIHEQSGDINRGVERADPYEQGAGDQGMMFGYATNETENYMPLALDLSHSLLWELAKIRKEEPDLMPYLRPDAKSQVTIEYDDNGKPLRIDTIVVSTQHDEFIGPKGISQKEADEAMQKRIALDVKKILIPRVKAQYPAHVQALFNDNIIYHVNPTGKFVIGGPHGDTGLTGRKIIVDTYGGKGAHGGGAFSGKDPSKVDRSAAYAARHIAKNMVAAGVADEMLVQVSYAIGVAKPMNIFVNTFGRAKVNMTDGEIAAKIWDIFDMRPKAIEERLKLRNPIYFETASYGHMGRKPQTVTKTFSSRYLQKPVTCDVELFTWEKLDYADKIKDVFGL.

His-14 lines the ATP pocket. Asp-16 contacts Mg(2+). Glu-42 is a binding site for K(+). L-methionine is bound by residues Glu-55 and Gln-98. A flexible loop region spans residues 98 to 108; the sequence is QSGDINRGVER. Residues 165 to 167, 251 to 252, Asp-260, 266 to 267, Ala-283, and Lys-287 each bind ATP; these read DAK, KF, and RK. Asp-260 lines the L-methionine pocket. Residue Lys-291 participates in L-methionine binding.

The protein belongs to the AdoMet synthase family. As to quaternary structure, homotetramer; dimer of dimers. It depends on Mg(2+) as a cofactor. K(+) is required as a cofactor.

Its subcellular location is the cytoplasm. The catalysed reaction is L-methionine + ATP + H2O = S-adenosyl-L-methionine + phosphate + diphosphate. It functions in the pathway amino-acid biosynthesis; S-adenosyl-L-methionine biosynthesis; S-adenosyl-L-methionine from L-methionine: step 1/1. In terms of biological role, catalyzes the formation of S-adenosylmethionine (AdoMet) from methionine and ATP. The overall synthetic reaction is composed of two sequential steps, AdoMet formation and the subsequent tripolyphosphate hydrolysis which occurs prior to release of AdoMet from the enzyme. This chain is S-adenosylmethionine synthase, found in Parabacteroides distasonis (strain ATCC 8503 / DSM 20701 / CIP 104284 / JCM 5825 / NCTC 11152).